The primary structure comprises 515 residues: Bifunctional purine biosynthesis protein PurH (515 aa).

Positions 1–145 (MTKRALISVS…KNHASVTVVV (145 aa)) constitute an MGS-like domain.

The protein belongs to the PurH family.

The catalysed reaction is (6R)-10-formyltetrahydrofolate + 5-amino-1-(5-phospho-beta-D-ribosyl)imidazole-4-carboxamide = 5-formamido-1-(5-phospho-D-ribosyl)imidazole-4-carboxamide + (6S)-5,6,7,8-tetrahydrofolate. It carries out the reaction IMP + H2O = 5-formamido-1-(5-phospho-D-ribosyl)imidazole-4-carboxamide. The protein operates within purine metabolism; IMP biosynthesis via de novo pathway; 5-formamido-1-(5-phospho-D-ribosyl)imidazole-4-carboxamide from 5-amino-1-(5-phospho-D-ribosyl)imidazole-4-carboxamide (10-formyl THF route): step 1/1. It participates in purine metabolism; IMP biosynthesis via de novo pathway; IMP from 5-formamido-1-(5-phospho-D-ribosyl)imidazole-4-carboxamide: step 1/1. This Streptococcus pyogenes serotype M6 (strain ATCC BAA-946 / MGAS10394) protein is Bifunctional purine biosynthesis protein PurH.